A 376-amino-acid chain; its full sequence is Biotin synthase (376 aa).

In terms of domain architecture, Radical SAM core spans 68–292 (NEVQISTLLS…IAVTRICCPS (225 aa)). [4Fe-4S] cluster contacts are provided by C83, C87, and C90. Residues C129, C160, C220, and R296 each coordinate [2Fe-2S] cluster.

The protein belongs to the radical SAM superfamily. Biotin synthase family. In terms of assembly, homodimer. [4Fe-4S] cluster serves as cofactor. It depends on [2Fe-2S] cluster as a cofactor.

The enzyme catalyses (4R,5S)-dethiobiotin + (sulfur carrier)-SH + 2 reduced [2Fe-2S]-[ferredoxin] + 2 S-adenosyl-L-methionine = (sulfur carrier)-H + biotin + 2 5'-deoxyadenosine + 2 L-methionine + 2 oxidized [2Fe-2S]-[ferredoxin]. It functions in the pathway cofactor biosynthesis; biotin biosynthesis; biotin from 7,8-diaminononanoate: step 2/2. Functionally, catalyzes the conversion of dethiobiotin (DTB) to biotin by the insertion of a sulfur atom into dethiobiotin via a radical-based mechanism. This chain is Biotin synthase, found in Psychrobacter cryohalolentis (strain ATCC BAA-1226 / DSM 17306 / VKM B-2378 / K5).